The primary structure comprises 475 residues: Ribulose bisphosphate carboxylase large chain (475 aa).

A propeptide spanning residues 1–2 (MS) is cleaved from the precursor. The residue at position 3 (proline 3) is an N-acetylproline. N6,N6,N6-trimethyllysine is present on lysine 14. Substrate-binding residues include asparagine 123 and threonine 173. Catalysis depends on lysine 175, which acts as the Proton acceptor. Lysine 177 contributes to the substrate binding site. 3 residues coordinate Mg(2+): lysine 201, aspartate 203, and glutamate 204. Lysine 201 is modified (N6-carboxylysine). Histidine 294 serves as the catalytic Proton acceptor. 3 residues coordinate substrate: arginine 295, histidine 327, and serine 379.

Belongs to the RuBisCO large chain family. Type I subfamily. As to quaternary structure, heterohexadecamer of 8 large chains and 8 small chains; disulfide-linked. The disulfide link is formed within the large subunit homodimers. Mg(2+) is required as a cofactor. In terms of processing, the disulfide bond which can form in the large chain dimeric partners within the hexadecamer appears to be associated with oxidative stress and protein turnover.

Its subcellular location is the plastid. It is found in the chloroplast. It carries out the reaction 2 (2R)-3-phosphoglycerate + 2 H(+) = D-ribulose 1,5-bisphosphate + CO2 + H2O. It catalyses the reaction D-ribulose 1,5-bisphosphate + O2 = 2-phosphoglycolate + (2R)-3-phosphoglycerate + 2 H(+). Its function is as follows. RuBisCO catalyzes two reactions: the carboxylation of D-ribulose 1,5-bisphosphate, the primary event in carbon dioxide fixation, as well as the oxidative fragmentation of the pentose substrate in the photorespiration process. Both reactions occur simultaneously and in competition at the same active site. The protein is Ribulose bisphosphate carboxylase large chain of Chlorokybus atmophyticus (Soil alga).